A 428-amino-acid chain; its full sequence is Histidine--tRNA ligase (428 aa).

The protein belongs to the class-II aminoacyl-tRNA synthetase family. In terms of assembly, homodimer.

It localises to the cytoplasm. It carries out the reaction tRNA(His) + L-histidine + ATP = L-histidyl-tRNA(His) + AMP + diphosphate + H(+). The protein is Histidine--tRNA ligase of Staphylococcus carnosus (strain TM300).